The sequence spans 789 residues: Glycerol-3-phosphate acyltransferase (789 aa).

The HXXXXD motif signature appears at histidine 276–aspartate 281.

The protein belongs to the GPAT/DAPAT family.

The protein localises to the cell membrane. It catalyses the reaction sn-glycerol 3-phosphate + an acyl-CoA = a 1-acyl-sn-glycero-3-phosphate + CoA. It participates in phospholipid metabolism; CDP-diacylglycerol biosynthesis; CDP-diacylglycerol from sn-glycerol 3-phosphate: step 1/3. The sequence is that of Glycerol-3-phosphate acyltransferase (plsB) from Mycobacterium tuberculosis (strain CDC 1551 / Oshkosh).